Consider the following 167-residue polypeptide: MVELESQEAVTVASTADIAVDVSLRLLAAATSLASAVVVAANHQQRWGVRVDFTLFQVWIGFVAVNLVCTVYAAATAAAARKAMGRWWLHHADAVVVNLEAAATAGAGAIGSIAMWGNEASGWYAVCRLYRRYCNAGAAALALSLAAVLLLGVACARSRYPKMPPTT.

At 1-17 (MVELESQEAVTVASTAD) the chain is on the cytoplasmic side. A helical membrane pass occupies residues 18–38 (IAVDVSLRLLAAATSLASAVV). The Extracellular portion of the chain corresponds to 39–54 (VAANHQQRWGVRVDFT). Residues 55–75 (LFQVWIGFVAVNLVCTVYAAA) traverse the membrane as a helical segment. Over 76-94 (TAAAARKAMGRWWLHHADA) the chain is Cytoplasmic. A helical transmembrane segment spans residues 95–115 (VVVNLEAAATAGAGAIGSIAM). Residues 116–135 (WGNEASGWYAVCRLYRRYCN) lie on the Extracellular side of the membrane. A helical membrane pass occupies residues 136–156 (AGAAALALSLAAVLLLGVACA). At 157 to 167 (RSRYPKMPPTT) the chain is on the cytoplasmic side.

This sequence belongs to the Casparian strip membrane proteins (CASP) family. As to quaternary structure, homodimer and heterodimers.

It localises to the cell membrane. The polypeptide is CASP-like protein UU1 (Oryza sativa subsp. indica (Rice)).